We begin with the raw amino-acid sequence, 156 residues long: Small ribosomal subunit protein uS7c (156 aa).

This sequence belongs to the universal ribosomal protein uS7 family. As to quaternary structure, part of the 30S ribosomal subunit.

It localises to the plastid. It is found in the chloroplast. In terms of biological role, one of the primary rRNA binding proteins, it binds directly to 16S rRNA where it nucleates assembly of the head domain of the 30S subunit. The protein is Small ribosomal subunit protein uS7c (rps7) of Gracilaria tenuistipitata var. liui (Red alga).